The primary structure comprises 124 residues: MRITKVEGSLGLPCQSYQDDNEAEAERMDFEQLMHQALPIGENNPPAALNKNVVFTQRYRVSGGYLDGVECEVCESGGLIQLRINVPHHEIYRSMKALKQWLESQLLHMGYIISLEIFYVKNSE.

This chain is Secretion system apparatus protein SsaP (ssaP), found in Salmonella typhi.